Here is a 339-residue protein sequence, read N- to C-terminus: Nitrilase 2 (339 aa).

An N-acetylserine modification is found at Ser-2. In terms of domain architecture, CN hydrolase spans 18 to 290 (VRATIVQAST…EGLITADLDL (273 aa)). Glu-58 functions as the Proton acceptor in the catalytic mechanism. The Proton donor role is filled by Lys-145. The Nucleophile role is filled by Cys-179.

This sequence belongs to the carbon-nitrogen hydrolase superfamily. Nitrilase family.

It is found in the cell membrane. The catalysed reaction is a nitrile + 2 H2O = a carboxylate + NH4(+). Its function is as follows. Can convert indole-3-acetonitrile to the plant hormone indole-3-acetic acid. The chain is Nitrilase 2 (NIT2) from Arabidopsis thaliana (Mouse-ear cress).